Consider the following 451-residue polypeptide: MRVLFAVFSLIMACQAYDAVLFSNSREIGGTPAAKLVESATAEEPVVFIVNPDFTLGQFSVKANAYTSEPSADYLAKSVKNSNFHESQYFSHQIEATQAQWLSSADQYSAGSPIYIIYGEEWTSMEQLAEQLISKIDNSVGIITSTDAVAHEKSSRVKRVATDEFNSDSENSAAAEANGGFPFPLVIPPYNQTFYSVKPTNGHSCLFYLEGLTVVVEQKKEKVLYYANAYIPGSNFTWAYSETDVTCPNGTIGDFIFKIHLTLENDITGMQGTSKKAFTMKKGDKIDFDLTFTGDLFGYWALNKASASNLAISGYDPYKSASVDGSKVVNGSATQYTKLNSVAGWSLACGQSQAVFFPTNEQSVRIGVALMNTQIQLFNYQNPEKWVESAHFTLQTEDCTGTFSSGSWMGIVSALVLIAGLMFGYVMLQSVQTMDRFDDPKQRQIVINVRE.

The first 16 residues, 1–16 (MRVLFAVFSLIMACQA), serve as a signal peptide directing secretion. Over 17-407 (YDAVLFSNSR…DCTGTFSSGS (391 aa)) the chain is Lumenal. 4 N-linked (GlcNAc...) asparagine glycosylation sites follow: asparagine 191, asparagine 235, asparagine 249, and asparagine 330. The helical transmembrane segment at 408–428 (WMGIVSALVLIAGLMFGYVML) threads the bilayer. The Cytoplasmic portion of the chain corresponds to 429–451 (QSVQTMDRFDDPKQRQIVINVRE).

It belongs to the vacuolar ATPase subunit S1 family. Accessory component of the multisubunit proton-transporting vacuolar (V)-ATPase protein pump. In terms of tissue distribution, expressed in pharynx, hypodermis, intestine, vulval hypodermis and the H-shape excretory cell.

It is found in the membrane. Its function is as follows. Accessory subunit of the proton-transporting vacuolar (V)-ATPase protein pump, which is required for luminal acidification of secretory vesicles. In the germline, required for the trafficking of the receptor RME-2 to the oocyte cell membrane where it regulates the uptake of yolk proteins. Also, plays an essential role in osmoregulation in the embryo, probably by regulating the proper formation of the eggshell. The sequence is that of V-type proton ATPase subunit S1 from Caenorhabditis elegans.